The chain runs to 170 residues: APRG1 tumor suppressor candidate (170 aa).

A helical membrane pass occupies residues 150–170; it reads IALALAGPGAILILELSWFLG.

In terms of tissue distribution, expressed at high levels in the pancreas and placenta. As to expression, expressed at high levels in the kidney.

The protein localises to the membrane. The sequence is that of APRG1 tumor suppressor candidate from Homo sapiens (Human).